The chain runs to 447 residues: Rab GDP dissociation inhibitor alpha (447 aa).

Phosphoserine is present on S427.

Belongs to the Rab GDI family. As to quaternary structure, interacts with RHOH. Interacts with the non-phosphorylated forms of RAB1A, RAB3A, RAB5A, RAB5B, RAB5C, RAB8A, RAB8B, RAB10, RAB12, RAB35, and RAB43.

It is found in the cytoplasm. It localises to the golgi apparatus. Its subcellular location is the trans-Golgi network. Its function is as follows. Regulates the GDP/GTP exchange reaction of most Rab proteins by inhibiting the dissociation of GDP from them, and the subsequent binding of GTP to them. Promotes the dissociation of GDP-bound Rab proteins from the membrane and inhibits their activation. Promotes the dissociation of RAB1A, RAB3A, RAB5A and RAB10 from membranes. In Canis lupus familiaris (Dog), this protein is Rab GDP dissociation inhibitor alpha (GDI1).